Here is a 218-residue protein sequence, read N- to C-terminus: Elongation factor Ts (218 aa).

An involved in Mg(2+) ion dislocation from EF-Tu region spans residues 82–85 (TDFV).

This sequence belongs to the EF-Ts family.

The protein resides in the cytoplasm. Functionally, associates with the EF-Tu.GDP complex and induces the exchange of GDP to GTP. It remains bound to the aminoacyl-tRNA.EF-Tu.GTP complex up to the GTP hydrolysis stage on the ribosome. This is Elongation factor Ts from Prochlorococcus marinus (strain NATL1A).